A 215-amino-acid polypeptide reads, in one-letter code: Thymidylate kinase (215 aa).

Position 10-17 (10-17) interacts with ATP; it reads GGEGVGKT.

It belongs to the thymidylate kinase family.

The enzyme catalyses dTMP + ATP = dTDP + ADP. Its function is as follows. Phosphorylation of dTMP to form dTDP in both de novo and salvage pathways of dTTP synthesis. In Bartonella henselae (strain ATCC 49882 / DSM 28221 / CCUG 30454 / Houston 1) (Rochalimaea henselae), this protein is Thymidylate kinase.